Consider the following 366-residue polypeptide: 3-dehydroquinate synthase (366 aa).

NAD(+) contacts are provided by residues 69–74 (DGEAYK), 103–107 (GVIGD), 127–128 (TT), Lys-140, and Lys-149. 3 residues coordinate Zn(2+): Glu-182, His-245, and His-262.

Belongs to the sugar phosphate cyclases superfamily. Dehydroquinate synthase family. Co(2+) serves as cofactor. The cofactor is Zn(2+). Requires NAD(+) as cofactor.

The protein resides in the cytoplasm. The catalysed reaction is 7-phospho-2-dehydro-3-deoxy-D-arabino-heptonate = 3-dehydroquinate + phosphate. Its pathway is metabolic intermediate biosynthesis; chorismate biosynthesis; chorismate from D-erythrose 4-phosphate and phosphoenolpyruvate: step 2/7. Its function is as follows. Catalyzes the conversion of 3-deoxy-D-arabino-heptulosonate 7-phosphate (DAHP) to dehydroquinate (DHQ). This chain is 3-dehydroquinate synthase, found in Pseudomonas fluorescens (strain ATCC BAA-477 / NRRL B-23932 / Pf-5).